Here is a 212-residue protein sequence, read N- to C-terminus: Putative inactive 6-phospho-alpha-glucosidase (212 aa).

Residue 4–70 (FSVVVAGGGS…PDIAFSYTTD (67 aa)) coordinates NAD(+). Mn(2+) is bound by residues Cys169 and His200.

This sequence belongs to the glycosyl hydrolase 4 family.

The protein is Putative inactive 6-phospho-alpha-glucosidase of Escherichia coli (strain K12).